Reading from the N-terminus, the 363-residue chain is 43 kDa protein (363 aa).

The protein is 43 kDa protein (P43) of Lepidoptera (butterflies and moths).